Reading from the N-terminus, the 35-residue chain is Small toxic polypeptide LdrD (35 aa).

The chain crosses the membrane as a helical span at residues 10 to 32; that stretch reads FWHDLAAPVIAGILASMIVNWLN.

It belongs to the Ldr toxic peptide family.

The protein localises to the cell inner membrane. Toxic component of a type I toxin-antitoxin (TA) system. Overexpression causes rapid cell killing and nucleoid condensation of the host cell. Overexpression induces stress-response and a number of membrane protein genes. May inhibit ATP synthesis due to its insertion in the cell inner membrane. The polypeptide is Small toxic polypeptide LdrD (ldrD) (Escherichia coli (strain K12)).